A 320-amino-acid polypeptide reads, in one-letter code: Cytochrome f (320 aa).

The signal sequence occupies residues 1 to 35; sequence MQTRNTFSWIREEITRSISVSLMIYIITWASISSA. Positions 36, 56, 59, and 60 each coordinate heme. Residues 286–306 form a helical membrane-spanning segment; that stretch reads VQGLLFFLGSVVLAQIFLVLK.

This sequence belongs to the cytochrome f family. In terms of assembly, the 4 large subunits of the cytochrome b6-f complex are cytochrome b6, subunit IV (17 kDa polypeptide, petD), cytochrome f and the Rieske protein, while the 4 small subunits are PetG, PetL, PetM and PetN. The complex functions as a dimer. Requires heme as cofactor.

It localises to the plastid. The protein localises to the chloroplast thylakoid membrane. Its function is as follows. Component of the cytochrome b6-f complex, which mediates electron transfer between photosystem II (PSII) and photosystem I (PSI), cyclic electron flow around PSI, and state transitions. The chain is Cytochrome f from Nasturtium officinale (Watercress).